Here is a 709-residue protein sequence, read N- to C-terminus: SH3 domain-containing kinase-binding protein 1 (709 aa).

2 consecutive SH3 domains span residues 1–58 (MVEA…EIKK) and 98–157 (RRRR…ELSG). Phosphoserine is present on residues Ser-156, Ser-159, Ser-227, and Ser-274. A compositionally biased stretch (low complexity) spans 221–239 (ETTGSESDGGDSSSTKSEG). The interval 221–242 (ETTGSESDGGDSSSTKSEGANG) is disordered. 3 disordered regions span residues 289–309 (GKKL…MDSR), 372–485 (SDFD…KIDL), and 511–650 (DSVI…VSSQ). Thr-298 is subject to Phosphothreonine. The region spanning 311 to 372 (KTKDYCKVIF…PDNFVKLLPS (62 aa)) is the SH3 3 domain. Basic and acidic residues predominate over residues 399 to 434 (TERKHEIKKIPPERPETLPNRTEEKERPEREPKLDL). Ser-480 is modified (phosphoserine). The segment covering 513–528 (VISSTEKLSHPTTSRP) has biased composition (polar residues). Residues 535 to 554 (PPSQSLTSSSLSSPDIFDSP) show a composition bias toward low complexity. 3 positions are modified to phosphoserine: Ser-553, Ser-555, and Ser-565. The span at 561–575 (EEHISLAHRGIDVSK) shows a compositional bias: basic and acidic residues. Positions 579–592 (KTVTISQVSDNKTS) are enriched in polar residues. Residues 600-623 (MAAASSGPASLSSVASSPMSSSLG) show a composition bias toward low complexity. The segment covering 627–636 (QRASSPSLFS) has biased composition (polar residues). Residue Ser-631 is modified to Phosphoserine. Residues 646–708 (AVSSQAAIEE…VNDIKKALQS (63 aa)) adopt a coiled-coil conformation.

In terms of assembly, can self-associate and form homotetramers. Interacts with CD2, F-actin capping protein, PIK3R3, GRB2, EGFR, MET, BLNK, MAP3K4, PDCD6IP, SPRY2, ARHGAP17, ARHGAP27, CRK, BCAR1, SOS1, ASAP1, ARAP3, HIP1R, SYNJ2, INPP5D and STAP1. Interacts with E3 ubiquitin-protein ligase CBL. Interacts with CBLB, but does not interact with CBLC. Two molecules of SH3KBP1 seem to bind through their respective SH3 1 domain to one molecule of CBLB. The interaction with CBL or CBLB and EGFR is increased upon EGF stimulation. The interaction with CBL is attenuated by PDCD6IP. Interacts (via SH3 domains) with ARAP1. The interaction is independent of EGF and does not affect ARAP1 GTPase-activating activity but is involved in regulating ubiquitination and endocytic trafficking of EGFR. ARAP1 competes with CBL for binding to SH3KBP1 and prevents interaction of CBL with SH3KBP1; this is likely to regulate SH3KBP1-mediated internalization of EGFR. Interacts through its proline-rich region with the SH3 domain of endophilins SH3GL1, SH3GL2 and SH3GL3. The SH3KBP1-endophilin complex seems to associate with a complex containing the phosphorylated receptor (EGFR or MET) and phosphorylated CBL. Probably associates with ASAP1 and phosphorylated EGFR. Probably part of a complex consisting of at least SH3KBP1, ASAP1 and ARAP3. Interacts with focal adhesion kinases PTK2/FAK1 and PTK2B/PYK2, probably as a dimer. Interacts with DAB2 and probably associates with chathrin through its interaction with DAB2. Part of a complex consisting of SH3KBP1, DAB2, and clathrin heavy chain. DAB2 and clathrin dissociate from SH3KBP1 following growth factor treatment, enabling interaction with CBL. Interacts with DDN and probably associates with MAGI2 through its interaction with DDN. Interacts with the SH3 domains of SRC tyrosine-protein kinases SRC, LCK, LYN, FGR, FYN and HCK. Interacts with TRADD, BIRC2, TRAF1, TRAF2 and TNFR1, and the association with a TNFR1-associated complex upon stimulation with TNF-alpha seems to be mediated by SRC. Probably part of a complex consisting of at least SH3KBP1, ASAP1 and ARAP3. Interacts (via SH3 domains) with SHKBP1 (via PXXXPR motifs). Interacts with ATX2. Interaction with CBL is abolished in the presence of SHKBP1. Interacts (via SH3 domains) with ZFP36 (via extreme C-terminal region). Interacts with MAP3K4; this interaction enhances the association with ZFP36. Post-translationally, monoubiquitinated by CBL and CBLB after EGF stimulation; probably on its C-terminus.

It is found in the cytoplasm. The protein resides in the cytoskeleton. Its subcellular location is the cytoplasmic vesicle membrane. The protein localises to the synapse. It localises to the synaptosome. It is found in the cell junction. The protein resides in the focal adhesion. In terms of biological role, adapter protein involved in regulating diverse signal transduction pathways. Involved in the regulation of endocytosis and lysosomal degradation of ligand-induced receptor tyrosine kinases, including EGFR and MET/hepatocyte growth factor receptor, through an association with CBL and endophilins. The association with CBL, and thus the receptor internalization, may be inhibited by an interaction with PDCD6IP and/or SPRY2. Involved in regulation of ligand-dependent endocytosis of the IgE receptor. Attenuates phosphatidylinositol 3-kinase activity by interaction with its regulatory subunit. May be involved in regulation of cell adhesion; promotes the interaction between TTK2B and PDCD6IP. May be involved in the regulation of cellular stress response via the MAPK pathways through its interaction with MAP3K4. Is involved in modulation of tumor necrosis factor mediated apoptosis. Plays a role in the regulation of cell morphology and cytoskeletal organization. Required in the control of cell shape and migration. Has an essential role in the stimulation of B cell activation. This chain is SH3 domain-containing kinase-binding protein 1 (Sh3kbp1), found in Mus musculus (Mouse).